Reading from the N-terminus, the 288-residue chain is Transmembrane protein 163 (288 aa).

The segment covering 1-11 (MERAPGSERRS) has biased composition (basic and acidic residues). The interval 1 to 64 (MERAPGSERR…ESGQFSDGFE (64 aa)) is disordered. Residues 1–87 (MERAPGSERR…HEAQNYRKKA (87 aa)) lie on the Cytoplasmic side of the membrane. A Phosphoserine modification is found at Ser11. A compositionally biased stretch (pro residues) spans 12–24 (PPGPGVPRPPPRG). Positions 25-42 (HAPSTAAPAPNPAPLSSS) are enriched in low complexity. Residues 41–71 (SSMQPDEERQPRISESGQFSDGFEDRGLLES) form a required for interaction with MCOLN1 region. Residues Ser54, Ser56, and Ser60 each carry the phosphoserine modification. Residues 88 to 108 (LWVSWLSIIVTLALAVAAFTV) form a helical membrane-spanning segment. Residues 109–115 (SVMRYSA) lie on the Extracellular side of the membrane. The helical transmembrane segment at 116 to 136 (SAFGFAFDAILDVLSSAIVLW) threads the bilayer. Residues 137-149 (RYSNAAAVHSAHR) are Cytoplasmic-facing. A helical membrane pass occupies residues 150–170 (EYIACVILGVIFLLSSICIVV). Residues 171–186 (KAIHDLSTRLLPEVDD) lie on the Extracellular side of the membrane. Residues 187–207 (FLFSVSILSGILCSVLAVLKF) form a helical membrane-spanning segment. Over 208-216 (MLGKVLTSR) the chain is Cytoplasmic. The helical transmembrane segment at 217 to 237 (ALITDGFNSLVGGVMGFSILL) threads the bilayer. At 238–254 (SAEVFKHNAAVWYLDGS) the chain is on the extracellular side. A helical membrane pass occupies residues 255-275 (IGVLIGLTIFAYGVKLLIDMV). At 276-288 (PRVRQTRHYEMFE) the chain is on the cytoplasmic side.

Belongs to the TMEM163 family. In terms of assembly, homodimer. Interacts with MCOLN1. Interacts with SLC30A1, SLC30A2, SLC30A3 and SLC30A4. Strongly expressed in brain. Also detected in lung, liver, kidney and spleen. Mainly expressed in the glutaminergic neuron subpopulations.

Its subcellular location is the cytoplasmic vesicle. It localises to the secretory vesicle. It is found in the synaptic vesicle membrane. The protein localises to the early endosome membrane. The protein resides in the late endosome membrane. Its subcellular location is the lysosome membrane. It localises to the cell membrane. The enzyme catalyses Zn(2+)(in) = Zn(2+)(out). Its function is as follows. Zinc ion transporter that mediates zinc efflux and plays a crucial role in intracellular zinc homeostasis. Binds the divalent cations Zn(2+), Ni(2+), and to a minor extent Cu(2+). Is a functional modulator of P2X purinoceptors, including P2RX1, P2RX3, P2RX4 and P2RX7. Plays a role in central nervous system development and is required for myelination, and survival and proliferation of oligodendrocytes. The chain is Transmembrane protein 163 (Tmem163) from Rattus norvegicus (Rat).